Here is a 1392-residue protein sequence, read N- to C-terminus: DNA-directed RNA polymerase subunit beta'' (1392 aa).

Zn(2+) contacts are provided by Cys-224, Cys-295, Cys-302, and Cys-305.

Belongs to the RNA polymerase beta' chain family. RpoC2 subfamily. In terms of assembly, in plastids the minimal PEP RNA polymerase catalytic core is composed of four subunits: alpha, beta, beta', and beta''. When a (nuclear-encoded) sigma factor is associated with the core the holoenzyme is formed, which can initiate transcription. The cofactor is Zn(2+).

The protein resides in the plastid. Its subcellular location is the chloroplast. It carries out the reaction RNA(n) + a ribonucleoside 5'-triphosphate = RNA(n+1) + diphosphate. DNA-dependent RNA polymerase catalyzes the transcription of DNA into RNA using the four ribonucleoside triphosphates as substrates. In Solanum bulbocastanum (Wild potato), this protein is DNA-directed RNA polymerase subunit beta''.